We begin with the raw amino-acid sequence, 354 residues long: MAKQAIKRAKILAVKNNNKIGVLLINLGTPDEPSVPAVRRYLRQFLSDPKVIDVPSLMRWIIVHLCILPFRPKRSAKLYQKIWMPEGSPLLVYSEMLRERVGETLGDDFCVALGMRYGKPSIETALKKLQEAQCRQLIVLPLFPQYSTSTTASALEEVRAKNSFKEMTVIDRFFEEPHYIDSMTTLIHENLNEFQPDYFLFSYHGLPERHLVKSGCQLAICNRKNNCSPISSSNENCYRAQCFETSRLIAKKLNLTDQQYGVAFQSRLGRAKWIEPYTDKYLIELSKKGIKKLMVVCPSFPVDCLETLEEIGIRAQSQWQRLGGETLKLIPSLNAHPQWVNAIAKMAKKSLQLF.

Residues His-204 and Glu-306 each coordinate Fe cation.

Belongs to the ferrochelatase family.

Its subcellular location is the cytoplasm. The enzyme catalyses heme b + 2 H(+) = protoporphyrin IX + Fe(2+). It participates in porphyrin-containing compound metabolism; protoheme biosynthesis; protoheme from protoporphyrin-IX: step 1/1. Its function is as follows. Catalyzes the ferrous insertion into protoporphyrin IX. The sequence is that of Ferrochelatase from Coxiella burnetii (strain Dugway 5J108-111).